A 609-amino-acid chain; its full sequence is Mitogen-activated protein kinase kinase kinase 3 (609 aa).

Positions 1–202 (MPTWWGRKSC…SAVHGSRIGG (202 aa)) are disordered. Positions 11-28 (KNKDDNHRGIISTDRDIK) are enriched in basic and acidic residues. Composition is skewed to low complexity over residues 40–64 (PTRG…GFDS) and 90–108 (VSGS…SSGS). The Protein kinase domain occupies 214 to 470 (WKKGKFLGSG…ASQLLEHPFL (257 aa)). Residues 220–228 (LGSGTFGQV) and K243 contribute to the ATP site. D339 serves as the catalytic Proton acceptor. 2 disordered regions span residues 487 to 511 (PRSY…SHDN) and 590 to 609 (MEPS…SRLV). Positions 594-609 (SFRTQTPNSPLRSRLV) are enriched in polar residues.

It belongs to the protein kinase superfamily. STE Ser/Thr protein kinase family. MAP kinase kinase kinase subfamily. In terms of assembly, interacts with PBL27. In terms of tissue distribution, expressed in flower buds, roots, leaves, seedlings, stems and immature siliques. Absent of mature pollen.

The enzyme catalyses L-seryl-[protein] + ATP = O-phospho-L-seryl-[protein] + ADP + H(+). It carries out the reaction L-threonyl-[protein] + ATP = O-phospho-L-threonyl-[protein] + ADP + H(+). The sequence is that of Mitogen-activated protein kinase kinase kinase 3 from Arabidopsis thaliana (Mouse-ear cress).